A 93-amino-acid polypeptide reads, in one-letter code: Cytochrome c (93 aa).

The segment covering Ala-1 to Gly-13 has biased composition (low complexity). Residues Ala-1 to Asn-21 form a disordered region. Met-70 is a binding site for heme c.

Belongs to the cytochrome c family. Binds 1 heme c group covalently per subunit.

It is found in the mitochondrion intermembrane space. Electron carrier protein. The oxidized form of the cytochrome c heme group can accept an electron from the heme group of the cytochrome c1 subunit of cytochrome reductase. Cytochrome c then transfers this electron to the cytochrome oxidase complex, the final protein carrier in the mitochondrial electron-transport chain. This chain is Cytochrome c, found in Trypanosoma brucei brucei.